A 3253-amino-acid polypeptide reads, in one-letter code: tRNA nuclease CdiA (3253 aa).

Positions 1-32 (MHQPPVRFPYRLLSYLISTIIAGQPLLPAVGA) are cleaved as a signal peptide. A two-partner system transport domain (TPS) region spans residues 36–322 (PQNGAGMDKA…AGGNLSVTGT (287 aa)). The segment at 351–1384 (GELTAGQNAM…ITIRTGHLLN (1034 aa)) is FHA-1. Residues 1385–1656 (QREGINETKS…DLASGIVEGN (272 aa)) form a receptor binding domain (RBD) region. The YP domain stretch occupies residues 1657–1841 (YPLPSGNNGY…LSPKDVTLQN (185 aa)). A periplasmic FHA-1 repeat (pFR) region spans residues 1842–1902 (GSIISGQNVH…GLKAMGDINN (61 aa)). Positions 1944-2548 (TYTGSIASVS…TSKYDSKQTS (605 aa)) are FHA-2. Disordered regions lie at residues 2228–2252 (GSSK…TIGS), 2362–2410 (TGDP…GKNR), 2483–2503 (GSEK…GKTV), and 2687–2712 (IRDR…DSIS). Composition is skewed to polar residues over residues 2240-2252 (GTTQ…TIGS), 2368-2403 (TGVS…NLSV), and 2490-2503 (TEWT…GKTV). The tract at residues 2888–2930 (SDLSEEQKQTISTLATVSAGLAGGLTGNSSASAAVGAQSGKNA) is pretoxin (PT) domain. The short motif at 2931-2934 (VDNN) is the VDNN CT cleavage motif element. The C-terminal effector domain (CT) stretch occupies residues 2931-3253 (VDNNYLSVSE…TGIVSNFHPK (323 aa)).

It in the N-terminal section; belongs to the CdiA toxin family. This sequence in the C-terminal section; belongs to the bacterial EndoU family. In terms of assembly, forms a 1:1 complex with cognate immunity protein CdiI-STECO31. TRNase activity is metal-independent. is required as a cofactor. The CT domain is cleaved upon binding to receptor Tsx on target cells.

It localises to the secreted. The protein resides in the target cell. Its subcellular location is the target cell cytoplasm. In terms of biological role, toxic component of a toxin-immunity protein module, which functions as a cellular contact-dependent growth inhibition (CDI) system. CDI modules allow bacteria to communicate with and inhibit the growth of closely related neighboring target bacteria in a contact-dependent fashion (target cell counts decrease 1000- to 10000-fold with this CDI). Uses outer membrane nucleoside transporter Tsx on target cells as a receptor. Gains access to the cytoplasm of target cells by using integral inner membrane protein PTS system glucose-specific EIICB component (ptsG). Targeting of the C-terminal domain (CT) domain (residues 2931-3253) in the absence of immunity protein inhibits cell growth and causes tRNA(UUC-Glu) cleavage; expression of cognate immunity protein CdiI-STECO31 neutralizes growth inhibition leaving tRNA(UUC-Glu) is intact, whereas non-cognate immunity proteins do not confer protection. The CT domain cleaves tRNA; it is most active against tRNA(UUC-Glu), but also has modest activity against tRNA(GUC-Asp), tRNA(UUG-Gln), tRNA(CCC-Gly), tRNA(UCC-Gly), tRNA(GCC-Gly), tRNA(UUU-Lys), tRNA(GGU-Thr) and tRNA(CCA-Trp); tRNA cleavage is inhibited by cognate immunity protein CdiI. Cleavage of tRNA(UUC-Glu) occurs in the anticodon loop between cytosine(37) and 2-methyladenosine(38) (C37-m2A38) and probably also occurs in the anticodon loop of other tRNAs as well. The CdiA protein is thought to be exported from the cell through the central lumen of CdiB, the other half of its two-partner system (TPS). The TPS domain probably remains associated with CdiB while the FHA-1 domain forms an extended filament (33 nm long) with the receptor-binding domain (RBD) at its extremity; in the secretion arrested state the C-terminus of the RBD and YP domains form a hairpin-like structure as the FHA-2, PT and CT domains are periplasmic. The YP domain is probably responsible for this arrest at the point where it re-enters the host cell periplasm. Upon binding to a target cell outer membrane receptor (Tsx for this CDI) a signal is transmitted to activate secretion. The filament becomes about 5 nm longer, the rest of CdiA is secreted and the FHA-2 domain becomes stably associated with the target cell's outer membrane where it facilitates entry of the toxic CT domain into the target cell periplasm. From there the toxic CT domain is cleaved and gains access to the target cell cytoplasm via an inner membrane protein (PTS system glucose-specific EIICB component, ptsG for this CDI). The polypeptide is tRNA nuclease CdiA (Escherichia coli (strain STEC_O31)).